The primary structure comprises 506 residues: Lysine--tRNA ligase (506 aa).

Mg(2+) contacts are provided by Glu-416 and Glu-423.

Belongs to the class-II aminoacyl-tRNA synthetase family. Homodimer. The cofactor is Mg(2+).

It is found in the cytoplasm. The catalysed reaction is tRNA(Lys) + L-lysine + ATP = L-lysyl-tRNA(Lys) + AMP + diphosphate. The polypeptide is Lysine--tRNA ligase (Pelotomaculum thermopropionicum (strain DSM 13744 / JCM 10971 / SI)).